The chain runs to 60 residues: Large ribosomal subunit protein bL32 (60 aa).

Residues 1–23 are disordered; it reads MAVPKRKKSKSRRNMHRSHHAIK.

This sequence belongs to the bacterial ribosomal protein bL32 family.

The sequence is that of Large ribosomal subunit protein bL32 from Wolbachia sp. subsp. Brugia malayi (strain TRS).